The chain runs to 504 residues: Glycerol kinase (504 aa).

Position 12 (Thr12) interacts with ADP. Residues Thr12, Thr13, and Ser14 each coordinate ATP. Thr12 is a binding site for sn-glycerol 3-phosphate. An ADP-binding site is contributed by Arg16. The sn-glycerol 3-phosphate site is built by Arg82, Glu83, Tyr134, and Asp246. Residues Arg82, Glu83, Tyr134, Asp246, and Gln247 each coordinate glycerol. Thr268 and Gly312 together coordinate ADP. Residues Thr268, Gly312, Gln316, and Gly413 each contribute to the ATP site. The ADP site is built by Gly413 and Asn417.

The protein belongs to the FGGY kinase family.

The enzyme catalyses glycerol + ATP = sn-glycerol 3-phosphate + ADP + H(+). The protein operates within polyol metabolism; glycerol degradation via glycerol kinase pathway; sn-glycerol 3-phosphate from glycerol: step 1/1. Its activity is regulated as follows. Inhibited by fructose 1,6-bisphosphate (FBP). Key enzyme in the regulation of glycerol uptake and metabolism. Catalyzes the phosphorylation of glycerol to yield sn-glycerol 3-phosphate. This Pseudarthrobacter chlorophenolicus (strain ATCC 700700 / DSM 12829 / CIP 107037 / JCM 12360 / KCTC 9906 / NCIMB 13794 / A6) (Arthrobacter chlorophenolicus) protein is Glycerol kinase.